Here is a 312-residue protein sequence, read N- to C-terminus: Plasma membrane-associated coenzyme Q6 reductase PGA3 (312 aa).

Residues 1–15 (MSKEDIEGTNILDEP) lie on the Extracellular side of the membrane. The helical transmembrane segment at 16–36 (VHGIYIPAALFVVGVAITTYM) threads the bilayer. Residues 37–39 (SGE) are Cytoplasmic-facing. Residues 40 to 60 (LKILWSLPILFMIIFVRAYSA) form a helical membrane-spanning segment. Residues 61-179 (YKRRRSLYPD…LNYEPNSSKH (119 aa)) are Extracellular-facing. The region spanning 70–173 (DRWTSLELED…KGPIGTLNYE (104 aa)) is the FAD-binding FR-type domain. Residues 153–168 (AGLN…GPIG) and 179–211 (HLGI…KVSL) each bind FAD. The helical transmembrane segment at 180 to 200 (LGIVAGGSGITPVLQILNEII) threads the bilayer. The Cytoplasmic segment spans residues 201–312 (TVPEDLTKVS…SSGDDQVFVF (112 aa)).

The protein belongs to the flavoprotein pyridine nucleotide cytochrome reductase family. It depends on FAD as a cofactor.

The protein resides in the cell membrane. It localises to the endoplasmic reticulum membrane. The catalysed reaction is 2 Fe(III)-[cytochrome b5] + NADH = 2 Fe(II)-[cytochrome b5] + NAD(+) + H(+). Inhibited by diphenylene iodonium (DPI). Functionally, NADH-dependent cytochrome b5 reductase that reduces coenzyme Q6 at the plasma membrane and mediates lifespan extension by calorie restriction by shifting fermentative to respiratory metabolism, probably through modulating the NAD(+)/NADH ratio. The chain is Plasma membrane-associated coenzyme Q6 reductase PGA3 (PGA3) from Saccharomyces cerevisiae (strain ATCC 204508 / S288c) (Baker's yeast).